The chain runs to 499 residues: Probable alginate O-acetylase AlgI (499 aa).

A run of 11 helical transmembrane segments spans residues 7–25 (VFLF…LSPA), 40–62 (YAWW…YWIG), 78–100 (WLTL…NFGV), 115–137 (FVVT…ISYI), 150–172 (NLVD…VLRF), 239–261 (LYFD…GFRF), 312–334 (ILTM…WGAW), 354–373 (IRPL…WVIF), 380–397 (VAWR…WTLS), 407–429 (LQIA…QFYA), and 475–497 (VLLL…FLYF). Histidine 322 is an active-site residue.

This sequence belongs to the membrane-bound acyltransferase family.

The protein localises to the cell inner membrane. The protein operates within glycan biosynthesis; alginate biosynthesis. In terms of biological role, together with AlgJ and AlgF, forms an inner membrane complex which probably interacts with the alginate polymerization-transport complex and adds acetyl groups at the O-2 and O-3 positions of mannuronate residues. Acetylation of alginate increases cyst resistance to desiccation. The chain is Probable alginate O-acetylase AlgI (algI) from Azotobacter vinelandii.